The chain runs to 244 residues: MNKVNIKDSQNFITSKYHIEKIMNCISLDEKDNIFEIGAGKGHFTAELVKRCNFVTAIEIDSKLCEVTRNKLLNYPNYQIVNDDILKFTFPSHNPYKIFGSIPYNISTNIIRKIVFESSATISYLIVEYGFAKRLLDTNRSLALLLMAEVDISILAKIPRYYFHPKPKVDSALIVLKRKPAKMAFKERKKYETFVMKWVNKEYEKLFTKNQFNKALKHARIYDINNISFEQFVSLFNSYKIFNG.

The S-adenosyl-L-methionine site is built by Asn11, Ile13, Gly38, Glu59, Asp84, and Ser101.

Belongs to the class I-like SAM-binding methyltransferase superfamily. rRNA adenine N(6)-methyltransferase family.

Functionally, involved in erythromycin resistance. The sequence is that of rRNA adenine N-6-methyltransferase (ermG) from Lysinibacillus sphaericus (Bacillus sphaericus).